We begin with the raw amino-acid sequence, 37 residues long: Large ribosomal subunit protein bL36c (37 aa).

It belongs to the bacterial ribosomal protein bL36 family.

Its subcellular location is the plastid. The protein localises to the chloroplast. In Gracilaria tenuistipitata var. liui (Red alga), this protein is Large ribosomal subunit protein bL36c.